Here is a 653-residue protein sequence, read N- to C-terminus: Epithelial sodium channel subunit gamma (653 aa).

The Cytoplasmic segment spans residues 1-55 (MAPGEKIKAKIKKNLPVKGPQAPTIKELMRWYCLNTNTHGCRRIVVSPGRLRRLL). Residues 56–76 (WIAFTLTAVGLIFWQCALLVF) traverse the membrane as a helical segment. The Extracellular segment spans residues 77–538 (SFYTVSVSIK…EMLLSNFGGQ (462 aa)). Disulfide bonds link C100–C287, C211–C218, C264–C271, C376–C461, C398–C457, C402–C453, C411–C438, and C413–C427. The gating release of inhibition by proteolysis (GRIP); protease-sensitive region that is responsible for the proteolytic activation of the channel stretch occupies residues 137–225 (RKQRDTESWS…SDCATYTFSS (89 aa)). Residue N213 is glycosylated (N-linked (GlcNAc...) asparagine). An N-linked (GlcNAc...) asparagine glycan is attached at N275. The N-linked (GlcNAc...) asparagine glycan is linked to N501. The helical transmembrane segment at 539–559 (LGLWMSCSVVCVIEIIEVFFI) threads the bilayer. Topologically, residues 560 to 653 (DSLSIVTRRQ…LADTRLPDEP (94 aa)) are cytoplasmic. The disordered stretch occupies residues 582 to 632 (AAPSAEAPSGAQGQENPALEIDDDLPTFTSALSLPPAPGAQVPGTPPPRYN). Positions 627 to 631 (PPPRY) match the PY motif; recruits WW domain-containing proteins and is thereby required for ubiquitination and inhibition of the channel by NEDD4 and NEDD4L motif.

Belongs to the amiloride-sensitive sodium channel (TC 1.A.6) family. SCNN1G subfamily. Component of the heterotrimeric epithelial sodium channel (ENaC) composed of an alpha/SCNN1A, a beta/SCNN1B and a gamma/SCNN1G subunit. Interacts with WWP1 (via WW domains). Interacts with WWP2 (via WW domains); inhibits the channel. Interacts with the full-length immature form of PCSK9 (pro-PCSK9); inhibits ENaC by promoting its proteasomal degradation. Interacts with BPIFA1; the interaction is indirect via SCNN1B and inhibits the proteolytic maturation of SCNN1A and SCNN1G and the activation of ENaC. Post-translationally, phosphorylated on serine and threonine residues. Aldosterone and insulin increase the basal level of phosphorylation. Ubiquitinated. Can be ubiquitinated at multiple sites and undergo monoubiquitination and polyubiquitination. Ubiquitination by NEDD4 or NEDD4L inhibits the ENaC channel through endocytosis, intracellular retention and degradation of its individual subunits. In terms of processing, ENaC is activated through the proteolytic maturation of its subunits. Furin cleaves the SCNN1G subunit first, followed by cleavage by prostasin (PRSS8), which results in a stepwise increase in the open probability of the channel due to the release of an inhibitory tract. BPIFA1, which is recruited by the SCNN1B subunit, prevents the proteolytic activation of ENaC. Post-translationally, N-glycosylated. N-linked glycans are processed to complex type during ENaC complex assembly and transport to the plasma membrane.

The protein resides in the apical cell membrane. It catalyses the reaction Na(+)(in) = Na(+)(out). Its activity is regulated as follows. Originally identified and characterized by its inhibition by the diuretic drug amiloride. In terms of biological role, this is one of the three pore-forming subunits of the heterotrimeric epithelial sodium channel (ENaC), a critical regulator of sodium balance and fluid homeostasis. ENaC operates in epithelial tissues, where it mediates the electrodiffusion of sodium ions from extracellular fluid through the apical membrane of cells, with water following osmotically. It plays a key role in maintaining sodium homeostasis through electrogenic sodium reabsorption in the kidneys. Additionally, ENaC is essential for airway surface liquid homeostasis, which is crucial for proper mucus clearance. This is Epithelial sodium channel subunit gamma from Oryctolagus cuniculus (Rabbit).